Reading from the N-terminus, the 431-residue chain is UDP-N-acetylmuramate--L-alanine ligase (431 aa).

An ATP-binding site is contributed by 108–114; sequence GAHGKST.

Belongs to the MurCDEF family.

The protein resides in the cytoplasm. It catalyses the reaction UDP-N-acetyl-alpha-D-muramate + L-alanine + ATP = UDP-N-acetyl-alpha-D-muramoyl-L-alanine + ADP + phosphate + H(+). It functions in the pathway cell wall biogenesis; peptidoglycan biosynthesis. Its function is as follows. Cell wall formation. The protein is UDP-N-acetylmuramate--L-alanine ligase of Campylobacter jejuni subsp. jejuni serotype O:23/36 (strain 81-176).